Reading from the N-terminus, the 242-residue chain is MSPLEQFKVVRLLEIPMPFGMDISFTNCALFMILASLVSAVLLCCALRKRTDGSSSMSHTAVELIYNFVVGAIESNAGVGGLRYIPFVLSIFLFVLACNIIGILPLGFTATSHVSVTLALSVVVCASVTVLGFNHQGLHFLRIFLPEGTPLWLAPMMVFIKLFAYLARPVSLAIRLAANMIAGHTIIAVIAEFVLKMHPVLAPLPFAFIMVLIAFEIFVAILQAYIFTVLTTVYLSDAVAGH.

A run of 7 helical transmembrane segments spans residues Ile23 to Leu43, Val62 to Leu82, Tyr84 to Leu104, His113 to Phe133, Ile143 to Phe163, Leu176 to Lys196, and Leu201 to Ile221.

This sequence belongs to the ATPase A chain family. F-type ATPases have 2 components, CF(1) - the catalytic core - and CF(0) - the membrane proton channel. CF(1) has five subunits: alpha(3), beta(3), gamma(1), delta(1), epsilon(1). CF(0) has three main subunits: a(1), b(2) and c(9-12). The alpha and beta chains form an alternating ring which encloses part of the gamma chain. CF(1) is attached to CF(0) by a central stalk formed by the gamma and epsilon chains, while a peripheral stalk is formed by the delta and b chains.

It localises to the cell inner membrane. Functionally, key component of the proton channel; it plays a direct role in the translocation of protons across the membrane. The sequence is that of ATP synthase subunit a from Anaplasma phagocytophilum (strain HZ).